Here is a 184-residue protein sequence, read N- to C-terminus: GTP cyclohydrolase 1 (184 aa).

Zn(2+) is bound by residues C75, H78, and C146.

It belongs to the GTP cyclohydrolase I family. Homomer.

It catalyses the reaction GTP + H2O = 7,8-dihydroneopterin 3'-triphosphate + formate + H(+). It participates in cofactor biosynthesis; 7,8-dihydroneopterin triphosphate biosynthesis; 7,8-dihydroneopterin triphosphate from GTP: step 1/1. This Coxiella burnetii (strain Dugway 5J108-111) protein is GTP cyclohydrolase 1.